The following is a 421-amino-acid chain: Testin (421 aa).

Positions 92–199 (MILTNPVAAK…GDVKLPYEMG (108 aa)) constitute a PET domain. Residues 133-164 (EKQPVAGSEGAQYRKKQLAKQLPAHDQDPSKC) are disordered. A compositionally biased stretch (basic and acidic residues) spans 155–164 (PAHDQDPSKC). 3 LIM zinc-binding domains span residues 234–297 (YFCY…CDSE), 299–359 (PRCA…NHAV), and 362–421 (QGCH…KMMS).

The protein belongs to the prickle / espinas / testin family. In terms of assembly, interacts via LIM domain 1 with ZYX. Interacts (via LIM domain 3) with ENAH and VASP. Interacts with ALKBH4, talin, actin, alpha-actinin, GRIP1 and PXN. Interacts (via LIM domain 2) with ACTL7A (via N-terminus). Heterodimer with ACTL7A; the heterodimer interacts with ENAH to form a heterotrimer.

The protein resides in the cytoplasm. It localises to the cell junction. The protein localises to the focal adhesion. In terms of biological role, scaffold protein that may play a role in cell adhesion, cell spreading and in the reorganization of the actin cytoskeleton. Plays a role in the regulation of cell proliferation. May act as a tumor suppressor. The chain is Testin (TES) from Oryctolagus cuniculus (Rabbit).